The primary structure comprises 269 residues: Putative hydro-lyase Swoo_1731 (269 aa).

This sequence belongs to the D-glutamate cyclase family.

The sequence is that of Putative hydro-lyase Swoo_1731 from Shewanella woodyi (strain ATCC 51908 / MS32).